Reading from the N-terminus, the 134-residue chain is UPF0412 protein YaaI (134 aa).

The N-terminal stretch at 1-23 (MKSVITISASLAISLMLCCTAQA) is a signal peptide.

It belongs to the UPF0412 family.

This Escherichia coli (strain UTI89 / UPEC) protein is UPF0412 protein YaaI.